Reading from the N-terminus, the 733-residue chain is Folic acid synthesis protein fol1 (733 aa).

DHNA regions lie at residues 55–167 (VVVE…YAER) and 179–277 (IEFS…QIYR). Tyr-281 is modified (phosphotyrosine). The HPK stretch occupies residues 295 to 454 (NKIAYLSFGS…LPSQGIRLYS (160 aa)). A Pterin-binding domain is found at 465 to 724 (ALTMGILNVT…DTKEMSKVVG (260 aa)). A DHPS region spans residues 467–733 (TMGILNVTPD…GMANAIRYVP (267 aa)). Asn-472 is a Mg(2+) binding site. (7,8-dihydropterin-6-yl)methyl diphosphate is bound by residues Thr-511, Asp-546, Asn-565, Asp-637, Lys-677, and 712–714 (RVH).

It in the N-terminal section; belongs to the DHNA family. The protein in the central section; belongs to the HPPK family. In the C-terminal section; belongs to the DHPS family. Mg(2+) is required as a cofactor.

The protein localises to the cytoplasm. The catalysed reaction is 7,8-dihydroneopterin = 6-hydroxymethyl-7,8-dihydropterin + glycolaldehyde. It carries out the reaction 6-hydroxymethyl-7,8-dihydropterin + ATP = (7,8-dihydropterin-6-yl)methyl diphosphate + AMP + H(+). It catalyses the reaction (7,8-dihydropterin-6-yl)methyl diphosphate + 4-aminobenzoate = 7,8-dihydropteroate + diphosphate. It functions in the pathway cofactor biosynthesis; tetrahydrofolate biosynthesis; 2-amino-4-hydroxy-6-hydroxymethyl-7,8-dihydropteridine diphosphate from 7,8-dihydroneopterin triphosphate: step 3/4. It participates in cofactor biosynthesis; tetrahydrofolate biosynthesis; 2-amino-4-hydroxy-6-hydroxymethyl-7,8-dihydropteridine diphosphate from 7,8-dihydroneopterin triphosphate: step 4/4. Its pathway is cofactor biosynthesis; tetrahydrofolate biosynthesis; 7,8-dihydrofolate from 2-amino-4-hydroxy-6-hydroxymethyl-7,8-dihydropteridine diphosphate and 4-aminobenzoate: step 1/2. In terms of biological role, catalyzes three sequential steps of tetrahydrofolate biosynthesis. The chain is Folic acid synthesis protein fol1 (fol1) from Schizosaccharomyces pombe (strain 972 / ATCC 24843) (Fission yeast).